Here is an 888-residue protein sequence, read N- to C-terminus: E3 ubiquitin-protein ligase SH3RF1 (888 aa).

The segment at 12–53 (CPVCLERLDASAKVLPCQHTFCKRCLLGIVGSRNELRCPECR) adopts an RING-type zinc-finger fold. Polar residues predominate over residues 108–127 (SSKDLQSSQGGQQPRVQSWS). Residues 108 to 128 (SSKDLQSSQGGQQPRVQSWSP) form a disordered region. SH3 domains are found at residues 134–193 (PQLP…IIKP) and 196–259 (QPPP…FNSA). Residues 275–321 (DAGECSSAAAQSSTAPKHSDTKKNTKKRHSFTSLTMANKSSQASQNR) are disordered. Positions 292–362 (HSDTKKNTKK…APSQVHISTT (71 aa)) are interaction with RAC1. Ser-304 is modified (phosphoserine). Residues 305-321 (FTSLTMANKSSQASQNR) show a composition bias toward polar residues. The interval 440–543 (HLRPQTRPSV…STAGGPAQKL (104 aa)) is interaction with AKT2. In terms of domain architecture, SH3 3 spans 445–506 (TRPSVYVAIY…PGNYVAPVTR (62 aa)). Disordered stretches follow at residues 516 to 548 (VPMSTAGQTSRGVTMVSPSTAGGPAQKLQGNGV), 620 to 639 (SVGLSHHSLASPQPAPLMPG), and 684 to 741 (TVLP…ASPT). Residues 520–535 (TAGQTSRGVTMVSPST) show a composition bias toward polar residues. Position 532 is a phosphoserine (Ser-532). The span at 692-704 (SPDSASSACGNSS) shows a compositional bias: polar residues. Over residues 707-718 (KPDKDSKKEKKG) the composition is skewed to basic and acidic residues. At Ser-735 the chain carries Phosphoserine. Positions 829 to 888 (VVCERHRVVVSYPPQSEAELELKEGDIVFVHKKREDGWFKGTLQRNGKTGLFPGSFVENI) constitute an SH3 4 domain.

This sequence belongs to the SH3RF family. Interacts with RAC1; in a GTP-dependent manner. Interacts with MAP3K10/MLK2 and MAP3K11/MLK3. Interacts with MAPK8IP; this interaction leads to the PJAC complex (POSH-JIP or SH3RF1/MAPK8IP apoptotic complex) with a 1:1 ratio. Interacts with SIAH1. Interacts with HERP1. Probably part of a signaling complex that may contain SH3RF1, MAPK8IP, DLK1, MAP2K4/MKK4, MAP2K7/MKK7, MAPK8/JNK1, MAPK9/JNK2, AKT1 and AKT2. Found in a complex with RAC2, MAP3K7/TAK1, MAP2K7/MKK7, MAPK8IP1/JIP1, MAPK8/JNK1 and MAPK9/JNK2. Found in a complex with RAC1, MAP3K11/MLK3, MAP2K7/MKK7, MAPK8IP1/JIP1 and MAPK8/JNK1. Interacts with SH3RF2. Phosphorylated at Ser-304 by AKT1 and AKT2. When phosphorylated, it has reduced ability to bind Rac. In terms of processing, autoubiquitinated. Ubiquitinated by SH3RF2, leading to proteasome-mediated degradation.

It is found in the cytoplasm. It localises to the perinuclear region. Its subcellular location is the cell projection. The protein resides in the lamellipodium. The protein localises to the golgi apparatus. It is found in the trans-Golgi network. The enzyme catalyses S-ubiquitinyl-[E2 ubiquitin-conjugating enzyme]-L-cysteine + [acceptor protein]-L-lysine = [E2 ubiquitin-conjugating enzyme]-L-cysteine + N(6)-ubiquitinyl-[acceptor protein]-L-lysine.. It functions in the pathway protein modification; protein ubiquitination. Functionally, has E3 ubiquitin-protein ligase activity. In the absence of an external substrate, it can catalyze self-ubiquitination. Stimulates ubiquitination of potassium channel KCNJ1, enhancing it's dynamin-dependent and clathrin-independent endocytosis. Acts as a scaffold protein that coordinates with MAPK8IP1/JIP1 in organizing different components of the JNK pathway, including RAC1 or RAC2, MAP3K11/MLK3 or MAP3K7/TAK1, MAP2K7/MKK7, MAPK8/JNK1 and/or MAPK9/JNK2 into a functional multiprotein complex to ensure the effective activation of the JNK signaling pathway. Regulates the differentiation of CD4(+) and CD8(+) T-cells and promotes T-helper 1 (Th1) cell differentiation. Regulates the activation of MAPK8/JNK1 and MAPK9/JNK2 in CD4(+) T-cells and the activation of MAPK8/JNK1 in CD8(+) T-cells. Plays a crucial role in the migration of neocortical neurons in the developing brain. Controls proper cortical neuronal migration and the formation of proximal cytoplasmic dilation in the leading process (PCDLP) in migratory neocortical neurons by regulating the proper localization of activated RAC1 and F-actin assembly. In terms of biological role, (Microbial infection) Plays an essential role in the targeting of HIV-1 Gag to the plasma membrane, this function is dependent on it's RING domain, and hence it's E3 ligase activity. This chain is E3 ubiquitin-protein ligase SH3RF1 (SH3RF1), found in Homo sapiens (Human).